A 425-amino-acid polypeptide reads, in one-letter code: MLNIKWIRENQELFDEKLSQRFIEPMSSKIAMLDGEKRKITCLIQEFQHARKVKSKILGNMASKSGEEFEGLQRDVKHINEKLEELEQDLNNNNELNELLNMLPNIPDEEVPYGMDESMNKLVRTYGETNPNALNKQHFELGTKLNLMDFEQTAKISGARFVTLKGDLAKLERALINFMIDVHTKEFDFFEISPPVLVRDNAMYNAGQLPKFAEESFATTNGYRLIPTAEVSLVNIVADTIIPREKLPMRYVAYTPCFRSEAGSSGRDTRGMIRLHQFGKVELVSITTTEESKNEHEYITNASETILQKLNLPYRVMLLCTGDMGFAAKKTYDIEVWLPGQKQYREIASCSNCGDFQARRMKARYKEFGSNETTLVHTLNASGLPIGRTMVAILENYQNEDGSITIPDVLINYMGGLQKITTYSE.

228–230 (TAE) lines the L-serine pocket. ATP is bound at residue 259–261 (RSE). Residue Glu-282 coordinates L-serine. An ATP-binding site is contributed by 346-349 (EIAS). Residue Ser-382 coordinates L-serine.

This sequence belongs to the class-II aminoacyl-tRNA synthetase family. Type-1 seryl-tRNA synthetase subfamily. Homodimer. The tRNA molecule binds across the dimer.

The protein localises to the cytoplasm. It catalyses the reaction tRNA(Ser) + L-serine + ATP = L-seryl-tRNA(Ser) + AMP + diphosphate + H(+). It carries out the reaction tRNA(Sec) + L-serine + ATP = L-seryl-tRNA(Sec) + AMP + diphosphate + H(+). The protein operates within aminoacyl-tRNA biosynthesis; selenocysteinyl-tRNA(Sec) biosynthesis; L-seryl-tRNA(Sec) from L-serine and tRNA(Sec): step 1/1. Its function is as follows. Catalyzes the attachment of serine to tRNA(Ser). Is also able to aminoacylate tRNA(Sec) with serine, to form the misacylated tRNA L-seryl-tRNA(Sec), which will be further converted into selenocysteinyl-tRNA(Sec). The sequence is that of Serine--tRNA ligase from Rickettsia felis (strain ATCC VR-1525 / URRWXCal2) (Rickettsia azadi).